We begin with the raw amino-acid sequence, 62 residues long: MANTNKLVAPGSAAAIDQMKYEIASEFGVNLGPEATARANGSVGGEITKRLVQMAEQQLGGK.

This sequence belongs to the alpha/beta-type SASP family.

SASP are bound to spore DNA. They are double-stranded DNA-binding proteins that cause DNA to change to an a-like conformation. They protect the DNA backbone from chemical and enzymatic cleavage and are thus involved in dormant spore's high resistance to UV light. The sequence is that of Small, acid-soluble spore protein A (sasP-A) from Priestia megaterium (Bacillus megaterium).